The primary structure comprises 369 residues: H-2 class I histocompatibility antigen, K-K alpha chain (369 aa).

The signal sequence occupies residues 1 to 21 (MAPCMLLLLLAAALAPTQTRA). An alpha-1 region spans residues 22–111 (GPHSLRYFHT…ALRYYNQSAG (90 aa)). At 22–305 (GPHSLRYFHT…EPPPSTVSNT (284 aa)) the chain is on the extracellular side. Residue Asn-107 is glycosylated (N-linked (GlcNAc...) asparagine). Residues 112–203 (GSHTFQRMYG…QLGNATLPRT (92 aa)) form an alpha-2 region. Residues Cys-122 and Cys-185 are joined by a disulfide bond. Asn-197 carries an N-linked (GlcNAc...) asparagine glycan. An alpha-3 region spans residues 204-295 (DSPKAHVTRH…GLPEPLTLRW (92 aa)). The Ig-like C1-type domain occupies 206–294 (PKAHVTRHSR…QGLPEPLTLR (89 aa)). Cys-224 and Cys-280 form a disulfide bridge. Residues 296-305 (EPPPSTVSNT) are connecting peptide. A helical transmembrane segment spans residues 306 to 328 (VIIAVLVVLGAAIVTGAVVAFVM). Residues 329–369 (KMRRRNTGGKGGDYALAPGSQTSDLSLPDCKVMVHDPHSLA) are Cytoplasmic-facing. A phosphoserine mark is found at Ser-351 and Ser-354.

This sequence belongs to the MHC class I family. As to quaternary structure, heterodimer of an alpha chain and a beta chain (beta-2-microglobulin).

It localises to the membrane. In terms of biological role, involved in the presentation of foreign antigens to the immune system. In Mus musculus (Mouse), this protein is H-2 class I histocompatibility antigen, K-K alpha chain (H2-K1).